The primary structure comprises 352 residues: MLSREEQNRCFVPVRRILDNEDLKLFKEGDAYKLIDSFICDLDEAVKDKPISASIPQSSSIEHVLNILDRVGEIKQENPAIDNMGSRFGNPAFQSFYDQVYIETPKLHQVFGIEHNAAMEAGRYFYESFGNRKRIDYGSGHELYFMSWLLILKQLGIFTKNDYPALVVRVFVKYVELMRSLQIFYTLEPAGSHGVWGLDDFHFLPFLFGAAQLVNHKYLRPKHVRDPEILEMCRADYMYLGYVYFLNKLKPSVSLRFHSPMIDDISAVKTWSKVNEGMIKMYRAEVLGKLPIMQHYLFGHLIPASPGMSPAPQDGDDSEVTHVHSHYADCCGIKIPSAISAAKNNGSRIPFD.

The protein belongs to the PTPA-type PPIase family.

Its subcellular location is the cytoplasm. The catalysed reaction is [protein]-peptidylproline (omega=180) = [protein]-peptidylproline (omega=0). PPIases accelerate the folding of proteins. It catalyzes the cis-trans isomerization of proline imidic peptide bonds in oligopeptides. Acts as a regulatory subunit for PP2A-like phosphatases modulating their activity or substrate specificity, probably by inducing a conformational change in the catalytic subunit, a direct target of the PPIase. Can reactivate inactive phosphatase PP2A-phosphatase methylesterase complexes (PP2Ai) in presence of ATP and Mg(2+) by dissociating the inactive form from the complex. The protein is Serine/threonine-protein phosphatase 2A activator 2 (rrd2) of Schizosaccharomyces pombe (strain 972 / ATCC 24843) (Fission yeast).